Consider the following 109-residue polypeptide: MLKVSKSPSLVRLKTRGESVCPISKTVDSFEVSVEYIPRGAVLAIEEFKKMVDSYRGREILHEELAVDLLEKVKAAVNPPYVKVTVKSYYIGVEVEVVAESGGVPPVYI.

Cys-21 acts as the Thioimide intermediate in catalysis. The active-site Proton donor/acceptor is Asp-28. Substrate is bound by residues Asp-28, 43–46 (LAIE), and 62–63 (HE).

Belongs to the archaeosine synthase type 2 family. Forms a symmetric tunnel-fold (T-fold) homodecamer of two head-to-head facing pentameric subunits, with 10 active sites at the intermonomer interfaces.

The enzyme catalyses 7-cyano-7-carbaguanosine(15) in tRNA + NH4(+) = archaeosine(15) in tRNA. Its pathway is tRNA modification; archaeosine-tRNA biosynthesis. Is responsible for the final step in the biosynthesis of archaeosine, a modified nucleoside present in the dihydrouridine loop (D-loop) of archaeal tRNA. Catalyzes the conversion of 7-cyano-7-deazaguanine (preQ0)-modified tRNA to archaeosine-tRNA, transforming a nitrile group to a formamidine group. Can use neither glutamine nor asparagine as amino donor in vitro, is only able to utilize free ammonium. However, the enzyme might function in vivo with a partner that serves to generate ammonium. This Pyrobaculum calidifontis (strain DSM 21063 / JCM 11548 / VA1) protein is Archaeosine synthase.